Reading from the N-terminus, the 677-residue chain is MAEVVAEVAEVAEMPTQMSPRVMEMSAPILGEKMELSTELTEMTPGEAVASSLFFQFMCSECGNLYNTLEEVLSHQEQHVPTVTEEEALTTQDTGLEPELVPGTEEGPFQCGECSQLILSPRELLAHQDAHLRESASQIQYQCGDCQELFPSPELWVAHRKAQHLSTAAAKPPVPPPLPPVTPPPPPPAPLEVKMEPYECPECSTLCTTPEEFLEHQGTHFDSLEKEEHNGLEEEEEDDEDDNEETEEEEEAAAEVGDDAKGGDKSAAGQAQGSGDGPPHCTSAGTRRRHRRASHGPASAAHPFYCSQCQRSFSSANRLLAHGRAHVGGTHECTTCSKVFKKAASLEQHLRLHRGEARYLCVDCGRGFGTELTLVAHRRAHTANPLHRCRCGKTFSNMTKFLYHRRTHAGKSGAPPSAAPPTVASAVASLAPAEPTPPPPAPPTPPAQLPCPQCPKSFASASRLSRHRRAVHGPPERRHRCGVCGKGFKKLVHVRNHLRTHTGERPFQCHACGKTFASLANLSRHQLTHTGVRPYQCLDCGKRFTQSSNLQQHRRLHLRPVAFARAPRLPITGLYNKSPYYCGTCGRWFRAMAGLRLHQRVHAQARTLTLQPPRSPPPAPPPPPEPQQTIMCTELGETIAIIETSQPLALADTLQLCQAALGASEASGLLQLDTAFM.

3 consecutive C2H2-type zinc fingers follow at residues 57–79 (FMCS…QEQH), 109–131 (FQCG…QDAH), and 141–164 (YQCG…KAQH). The interval 167 to 190 (TAAAKPPVPPPLPPVTPPPPPPAP) is disordered. A compositionally biased stretch (pro residues) spans 172 to 190 (PPVPPPLPPVTPPPPPPAP). Residues 198–220 (YECPECSTLCTTPEEFLEHQGTH) form a C2H2-type 4 zinc finger. Positions 223–232 (SLEKEEHNGL) are enriched in basic and acidic residues. Residues 223–300 (SLEKEEHNGL…RRASHGPASA (78 aa)) are disordered. Positions 233-257 (EEEEEDDEDDNEETEEEEEAAAEVG) are enriched in acidic residues. 4 consecutive C2H2-type zinc fingers follow at residues 304–326 (FYCS…GRAH), 331–353 (HECT…LRLH), 359–381 (YLCV…RRAH), and 387–408 (HRCR…RRTH). The tract at residues 408-449 (HAGKSGAPPSAAPPTVASAVASLAPAEPTPPPPAPPTPPAQL) is disordered. Positions 410–433 (GKSGAPPSAAPPTVASAVASLAPA) are enriched in low complexity. The segment covering 434–449 (EPTPPPPAPPTPPAQL) has biased composition (pro residues). 5 C2H2-type zinc fingers span residues 449–472 (LPCP…RAVH), 479–501 (HRCG…LRTH), 507–529 (FQCH…QLTH), 535–557 (YQCL…RRLH), and 580–602 (YYCG…QRVH). Residues 608–627 (LTLQPPRSPPPAPPPPPEPQ) are disordered. Residues 613-626 (PRSPPPAPPPPPEP) show a composition bias toward pro residues.

It belongs to the krueppel C2H2-type zinc-finger protein family.

The protein resides in the nucleus. Functionally, may be involved in transcriptional regulation. This is Zinc finger protein 526 (ZNF526) from Bos taurus (Bovine).